We begin with the raw amino-acid sequence, 73 residues long: Large ribosomal subunit protein bL31 (73 aa).

Zn(2+) is bound by residues Cys-16, Cys-18, Cys-37, and Cys-40.

This sequence belongs to the bacterial ribosomal protein bL31 family. Type A subfamily. In terms of assembly, part of the 50S ribosomal subunit. The cofactor is Zn(2+).

Its function is as follows. Binds the 23S rRNA. This chain is Large ribosomal subunit protein bL31, found in Hamiltonella defensa subsp. Acyrthosiphon pisum (strain 5AT).